We begin with the raw amino-acid sequence, 295 residues long: 4-diphosphocytidyl-2-C-methyl-D-erythritol kinase (295 aa).

The active site involves lysine 18. Position 101 to 111 (101 to 111 (PMGGGIGGGSS)) interacts with ATP. Residue aspartate 143 is part of the active site.

The protein belongs to the GHMP kinase family. IspE subfamily.

It catalyses the reaction 4-CDP-2-C-methyl-D-erythritol + ATP = 4-CDP-2-C-methyl-D-erythritol 2-phosphate + ADP + H(+). It functions in the pathway isoprenoid biosynthesis; isopentenyl diphosphate biosynthesis via DXP pathway; isopentenyl diphosphate from 1-deoxy-D-xylulose 5-phosphate: step 3/6. Functionally, catalyzes the phosphorylation of the position 2 hydroxy group of 4-diphosphocytidyl-2C-methyl-D-erythritol. The chain is 4-diphosphocytidyl-2-C-methyl-D-erythritol kinase from Vibrio cholerae serotype O1 (strain ATCC 39315 / El Tor Inaba N16961).